The following is a 154-amino-acid chain: Large ribosomal subunit protein uL15 (154 aa).

The disordered stretch occupies residues 1–54; it reads MKLHDLTPAPGSRKPKKRVGRGPGGTDKTAGRGHKGQKSRSGAGKGPFFEGGRS.

The protein belongs to the universal ribosomal protein uL15 family. As to quaternary structure, part of the 50S ribosomal subunit.

In terms of biological role, binds to the 23S rRNA. This is Large ribosomal subunit protein uL15 from Deinococcus geothermalis (strain DSM 11300 / CIP 105573 / AG-3a).